Consider the following 729-residue polypeptide: Glutamine synthetase (729 aa).

Positions 85–174 constitute a GS beta-grasp domain; that stretch reads THYTHWFQPL…IPTIFISYTG (90 aa). Residues 179–615 form the GS catalytic domain; sequence YKTPLLKALA…VLGDLAINHI (437 aa). The Mg(2+) site is built by Glu-215, Glu-217, Glu-286, and Glu-293. L-glutamate-binding positions include 337–338 and Gly-338; that span reads NG. His-342 contacts Mg(2+). The ATP site is built by Ser-346 and Arg-458. Arg-458 is an L-glutamate binding site.

Belongs to the glutamine synthetase family. In terms of assembly, homohexamer. The cofactor is Mg(2+).

The protein localises to the cytoplasm. The catalysed reaction is L-glutamate + NH4(+) + ATP = L-glutamine + ADP + phosphate + H(+). With respect to regulation, inhibited by L-histidine (46%), L-arginine (38%) and L-methionine-DL-sulphoximine. The activity of this enzyme is not controlled by adenylation. Functionally, catalyzes the ATP-dependent biosynthesis of glutamine from glutamate and ammonia. The sequence is that of Glutamine synthetase from Bacteroides fragilis (strain YCH46).